Here is a 430-residue protein sequence, read N- to C-terminus: Transcriptional regulatory protein RXT2 (430 aa).

Positions 408 to 430 (EIENTMEDGVVDDNEPDEEANRA) are disordered.

It belongs to the RXT2 family. As to quaternary structure, component of the RPD3C(L) complex composed of at least ASH1, CTI6, DEP1, PHO23, RPD3, RXT2, RXT3, SAP30, SDS3, SIN3, UME1 and UME6.

It localises to the nucleus. Component of the RPD3C(L) histone deacetylase complex (HDAC) responsible for the deacetylation of lysine residues on the N-terminal part of the core histones (H2A, H2B, H3 and H4). Histone deacetylation gives a tag for epigenetic repression and plays an important role in transcriptional regulation, cell cycle progression and developmental events. This is Transcriptional regulatory protein RXT2 (RXT2) from Saccharomyces cerevisiae (strain ATCC 204508 / S288c) (Baker's yeast).